The sequence spans 270 residues: 4-hydroxy-tetrahydrodipicolinate reductase (270 aa).

NAD(+) contacts are provided by residues Gly-8–Met-13 and Glu-34. Arg-35 provides a ligand contact to NADP(+). NAD(+)-binding positions include Gly-98–Thr-100 and Ser-122–Met-125. His-155 functions as the Proton donor/acceptor in the catalytic mechanism. Residue His-156 participates in (S)-2,3,4,5-tetrahydrodipicolinate binding. Lys-159 functions as the Proton donor in the catalytic mechanism. Residue Gly-165–Thr-166 participates in (S)-2,3,4,5-tetrahydrodipicolinate binding.

This sequence belongs to the DapB family.

It is found in the cytoplasm. It catalyses the reaction (S)-2,3,4,5-tetrahydrodipicolinate + NAD(+) + H2O = (2S,4S)-4-hydroxy-2,3,4,5-tetrahydrodipicolinate + NADH + H(+). The catalysed reaction is (S)-2,3,4,5-tetrahydrodipicolinate + NADP(+) + H2O = (2S,4S)-4-hydroxy-2,3,4,5-tetrahydrodipicolinate + NADPH + H(+). It participates in amino-acid biosynthesis; L-lysine biosynthesis via DAP pathway; (S)-tetrahydrodipicolinate from L-aspartate: step 4/4. Its function is as follows. Catalyzes the conversion of 4-hydroxy-tetrahydrodipicolinate (HTPA) to tetrahydrodipicolinate. The polypeptide is 4-hydroxy-tetrahydrodipicolinate reductase (Anaeromyxobacter dehalogenans (strain 2CP-C)).